A 755-amino-acid polypeptide reads, in one-letter code: Diamine oxidase [copper-containing] (755 aa).

Positions 1–24 (MGRGTLALGWAGAALLLLQMLAAA) are cleaved as a signal peptide. A glycan (N-linked (GlcNAc...) asparagine) is linked at Asn115. A disulfide bridge links Cys182 with Cys186. Residue Asp376 is the Proton acceptor of the active site. Cys394 and Cys420 are joined by a disulfide. Tyr464 functions as the Schiff-base intermediate with substrate; via topaquinone in the catalytic mechanism. At Tyr464 the chain carries 2',4',5'-topaquinone. His513 and His515 together coordinate Cu(2+). Residues Asp522, Leu523, and Asp524 each contribute to the Ca(2+) site. N-linked (GlcNAc...) asparagine glycosylation occurs at Asn541. Glu565, Phe656, Asn659, Glu661, Asp667, and Leu668 together coordinate Ca(2+). A Cu(2+)-binding site is contributed by His678. Residue Asn749 is glycosylated (N-linked (GlcNAc...) asparagine).

It belongs to the copper/topaquinone oxidase family. Homodimer; disulfide-linked. Requires Cu(2+) as cofactor. Ca(2+) serves as cofactor. L-topaquinone is required as a cofactor. Topaquinone (TPQ) is generated by copper-dependent autoxidation of a specific tyrosyl residue. Post-translationally, N-glycosylated; the glycans are primarily linear, di-, or tribranched fucosylated complex type.

The protein resides in the secreted. It localises to the extracellular space. It is found in the cell membrane. The enzyme catalyses histamine + O2 + H2O = imidazole-4-acetaldehyde + H2O2 + NH4(+). It carries out the reaction N(tau)-methylhistamine + O2 + H2O = 1-methylimidazole-4-acetaldehyde + H2O2 + NH4(+). The catalysed reaction is putrescine + O2 + H2O = 4-aminobutanal + H2O2 + NH4(+). It catalyses the reaction cadaverine + O2 + H2O = 5-aminopentanal + H2O2 + NH4(+). Inhibited by amiloride and amiloride analogs. Catalyzes the oxidative deamination of primary amines to the corresponding aldehydes with the concomitant production of hydrogen peroxide and ammonia. Its preferred substrates in vitro are the diamines histamine and 1-methylhistamine and it could therefore play a role in allergic and immune responses. Has a broad specificity for diamines and can also act on cadaverine and putrescine, two products of amino acid catabolism. It could also act on polyamines, like spermidine and spermine though less efficiently, and regulate various biological processes. This Sus scrofa (Pig) protein is Diamine oxidase [copper-containing].